The sequence spans 806 residues: Acetyl-CoA decarbonylase/synthase complex subunit alpha 1 (806 aa).

Cys73, Cys76, Cys77, Cys79, Cys84, and Cys94 together coordinate [4Fe-4S] cluster. Position 117 (His117) interacts with CO. [Ni-4Fe-4S] cluster-binding residues include His250, Cys278, and Cys323. 4Fe-4S ferredoxin-type domains lie at 407–436 and 446–475; these read DEEF…IPEA and SYLD…LNII. [4Fe-4S] cluster is bound by residues Cys417, Cys420, Cys423, Cys427, Cys455, Cys458, Cys461, and Cys465. Residues Cys523, Cys552, and Cys587 each contribute to the [Ni-4Fe-4S] cluster site.

Belongs to the Ni-containing carbon monoxide dehydrogenase family. Heterotetramer of two alpha and two epsilon subunits. The ACDS complex is made up of alpha, epsilon, beta, gamma and delta subunits with a probable stoichiometry of (alpha(2)epsilon(2))(4)-beta(8)-(gamma(1)delta(1))(8). Requires [4Fe-4S] cluster as cofactor. [Ni-4Fe-4S] cluster serves as cofactor.

It carries out the reaction CO + 2 oxidized [2Fe-2S]-[ferredoxin] + H2O = 2 reduced [2Fe-2S]-[ferredoxin] + CO2 + 2 H(+). It functions in the pathway one-carbon metabolism; methanogenesis from acetate. Carbon monoxide dehydrogenase activity is inhibited by KCN and is rapidly inactivated by O(2). In terms of biological role, part of the ACDS complex that catalyzes the reversible cleavage of acetyl-CoA, allowing growth on acetate as sole source of carbon and energy. The alpha-epsilon subcomponent functions as a carbon monoxide dehydrogenase. The polypeptide is Acetyl-CoA decarbonylase/synthase complex subunit alpha 1 (Methanosarcina barkeri (strain Fusaro / DSM 804)).